The primary structure comprises 313 residues: Protein FixB (313 aa).

255–283 lines the FAD pocket; sequence LYLAVGISGQIQHMVGANASQTIFAINKD.

Belongs to the ETF alpha-subunit/FixB family. As to quaternary structure, heterodimer of FixA and FixB.

Its pathway is amine and polyamine metabolism; carnitine metabolism. Functionally, required for anaerobic carnitine reduction. May bring reductant to CaiA. This Escherichia coli O139:H28 (strain E24377A / ETEC) protein is Protein FixB.